The sequence spans 165 residues: C-phycoerythrin class 2 subunit alpha (165 aa).

Cys-75 lines the phycourobilin pocket. 2 residues coordinate (2R,3E)-phycoerythrobilin: Cys-83 and Cys-140.

Belongs to the phycobiliprotein family. As to quaternary structure, heterodimer of an alpha and a beta chain. Contains two covalently linked phycoerythrobilin chromophores and one covalently linked phycourobilin chromophore.

The protein resides in the cellular thylakoid membrane. In terms of biological role, light-harvesting photosynthetic bile pigment-protein from the phycobiliprotein complex. The polypeptide is C-phycoerythrin class 2 subunit alpha (mpeA) (Synechococcus sp. (strain WH8020)).